Reading from the N-terminus, the 113-residue chain is Large ribosomal subunit protein eL33 (113 aa).

The protein belongs to the eukaryotic ribosomal protein eL33 family.

The protein is Large ribosomal subunit protein eL33 (RPL35A) of Tetrahymena thermophila (strain SB210).